A 601-amino-acid polypeptide reads, in one-letter code: Glutathione-regulated potassium-efflux system protein KefB (601 aa).

A run of 13 helical transmembrane segments spans residues 5-25 (DLLL…PIAA), 29-49 (IGAV…GLGF), 55-75 (EILH…GLEL), 87-107 (IFGI…GLLM), 115-135 (AAVV…LQLM), 152-172 (VLLF…LLAG), 181-201 (LKIG…RYLL), 207-227 (FIAG…LVLG), 230-250 (LFMD…GILL), 268-288 (GLLL…GVLY), 291-311 (ILWV…VLYG), 324-344 (LPFA…FSSA), and 356-376 (ALLL…MKGI). The region spanning 400 to 519 (KPQVIIVGFG…AGVKQFSRET (120 aa)) is the RCK N-terminal domain.

The protein belongs to the monovalent cation:proton antiporter 2 (CPA2) transporter (TC 2.A.37) family. KefB subfamily. In terms of assembly, interacts with the regulatory subunit KefG.

The protein localises to the cell inner membrane. In terms of biological role, pore-forming subunit of a potassium efflux system that confers protection against electrophiles. Catalyzes K(+)/H(+) antiport. This chain is Glutathione-regulated potassium-efflux system protein KefB, found in Cronobacter sakazakii (strain ATCC BAA-894) (Enterobacter sakazakii).